We begin with the raw amino-acid sequence, 406 residues long: Succinyl-diaminopimelate desuccinylase (406 aa).

His-95 serves as a coordination point for Zn(2+). The active site involves Asp-97. Residue Asp-128 participates in Zn(2+) binding. Catalysis depends on Glu-162, which acts as the Proton acceptor. Zn(2+) contacts are provided by Glu-163, Glu-191, and His-377.

The protein belongs to the peptidase M20A family. DapE subfamily. In terms of assembly, homodimer. It depends on Zn(2+) as a cofactor. The cofactor is Co(2+).

The enzyme catalyses N-succinyl-(2S,6S)-2,6-diaminopimelate + H2O = (2S,6S)-2,6-diaminopimelate + succinate. The protein operates within amino-acid biosynthesis; L-lysine biosynthesis via DAP pathway; LL-2,6-diaminopimelate from (S)-tetrahydrodipicolinate (succinylase route): step 3/3. Functionally, catalyzes the hydrolysis of N-succinyl-L,L-diaminopimelic acid (SDAP), forming succinate and LL-2,6-diaminopimelate (DAP), an intermediate involved in the bacterial biosynthesis of lysine and meso-diaminopimelic acid, an essential component of bacterial cell walls. The protein is Succinyl-diaminopimelate desuccinylase of Polaromonas naphthalenivorans (strain CJ2).